We begin with the raw amino-acid sequence, 423 residues long: MLRVRCLRGGSRGAEALHYIGSRLGRTVTGWVQRTFQSTQAATASSRNSCAADDKATDPLPKDCPVSSFNEWDPLEEVIVGRAENACVPPFTVEVKANTYDKHWPFYQKYGGSYFPKDHLQKAVAEIEEMCNILKMEGVTVRRPDPIDWSLKYKTPDFESTGLYGAMPRDILIVVGNEIIEAPMAWRARFFEYRAYRTIIKDYFRRGAKWTTAPKPTMADELYDQDYPIHSVEDRHKLAAQGKFVTTEFEPCFDAADFIRAGRDIFVQRSQVTNYMGIEWMRKHLAPDYRVHIVSFKDPNPMHIDATFNIIGPGLVLSNPDRPCHQIDLFKKAGWTIVTPPTPIIPDDHPLWMSSKWLSMNVLMLDEKRVMVDANEVPIQKMFEKLGISTIKVSIRNANSLGGGFHCWTCDVRRRGTLQSYFD.

The transit peptide at 1–43 (MLRVRCLRGGSRGAEALHYIGSRLGRTVTGWVQRTFQSTQAAT) directs the protein to the mitochondrion. Phosphoserine occurs at positions 46 and 49. D170 is a binding site for arginine. Residues D254 and H303 contribute to the active site. D305, R322, S354, and S355 together coordinate arginine. K385 carries the post-translational modification N6-acetyllysine. The active-site Amidino-cysteine intermediate is the C407.

Belongs to the amidinotransferase family. In terms of assembly, homodimer.

The protein localises to the mitochondrion inner membrane. The enzyme catalyses L-arginine + glycine = guanidinoacetate + L-ornithine. It catalyses the reaction 4-aminobutanoate + L-arginine = 4-guanidinobutanoate + L-ornithine. The catalysed reaction is beta-alanine + L-arginine = 3-guanidinopropanoate + L-ornithine. It carries out the reaction taurine + L-arginine = taurocyamine + L-ornithine. Its pathway is amine and polyamine biosynthesis; creatine biosynthesis; creatine from L-arginine and glycine: step 1/2. Functionally, transamidinase that catalyzes the transfer of the amidino group of L-arginine onto the amino moiety of acceptor metabolites such as glycine, beta-alanine, gamma-aminobutyric acid (GABA) and taurine yielding the corresponding guanidine derivatives. Catalyzes the rate-limiting step of creatine biosynthesis, namely the transfer of the amidino group from L-arginine to glycine to generate guanidinoacetate, which is then methylated by GAMT to form creatine. Provides creatine as a source for ATP generation in tissues with high energy demands, in particular skeletal muscle, heart and brain. The protein is Glycine amidinotransferase, mitochondrial (GATM) of Bos taurus (Bovine).